We begin with the raw amino-acid sequence, 143 residues long: Cofilin/actin-depolymerizing factor homolog 2 (143 aa).

The 138-residue stretch at 4–141 (GVKVSDECVY…FEDELRTIIL (138 aa)) folds into the ADF-H domain.

The protein belongs to the actin-binding proteins ADF family. As to quaternary structure, interacts with monomeric actin, does not bind to actin polymers.

The protein resides in the cytoplasm. It is found in the cytoskeleton. Functionally, not involved in actin polymerisation, instead functions to stimulate nucleotide exchange on monomeric actin and influence turnover of the small amount of cytosolic actin microfilaments. Essential for erythrocytic schizogony. The polypeptide is Cofilin/actin-depolymerizing factor homolog 2 (Plasmodium falciparum (isolate 3D7)).